A 659-amino-acid polypeptide reads, in one-letter code: Exoribonuclease 2 (659 aa).

Positions 189 to 532 (RRDLTALHFV…NHRLIKACLA (344 aa)) constitute an RNB domain. The S1 motif domain occupies 577–659 (NPEFRAEVQD…ETRSLIGNLV (83 aa)).

Belongs to the RNR ribonuclease family. RNase II subfamily.

It is found in the cytoplasm. The catalysed reaction is Exonucleolytic cleavage in the 3'- to 5'-direction to yield nucleoside 5'-phosphates.. In terms of biological role, involved in mRNA degradation. Hydrolyzes single-stranded polyribonucleotides processively in the 3' to 5' direction. The polypeptide is Exoribonuclease 2 (Mannheimia succiniciproducens (strain KCTC 0769BP / MBEL55E)).